The sequence spans 228 residues: 2-C-methyl-D-erythritol 4-phosphate cytidylyltransferase (228 aa).

Belongs to the IspD/TarI cytidylyltransferase family. IspD subfamily.

It catalyses the reaction 2-C-methyl-D-erythritol 4-phosphate + CTP + H(+) = 4-CDP-2-C-methyl-D-erythritol + diphosphate. It participates in isoprenoid biosynthesis; isopentenyl diphosphate biosynthesis via DXP pathway; isopentenyl diphosphate from 1-deoxy-D-xylulose 5-phosphate: step 2/6. Catalyzes the formation of 4-diphosphocytidyl-2-C-methyl-D-erythritol from CTP and 2-C-methyl-D-erythritol 4-phosphate (MEP). In Geobacillus thermodenitrificans (strain NG80-2), this protein is 2-C-methyl-D-erythritol 4-phosphate cytidylyltransferase.